The sequence spans 904 residues: Trichohyalin-like protein 1 (904 aa).

Residues 48–83 form the EF-hand domain; the sequence is CVLHAVEKNSNLLNIDSNGIISFDEFVLAIFNLLNL. 2 disordered regions span residues 102-792 and 858-890; these read PEKE…CSVE and PYTR…HPQR. The span at 113–128 shows a compositional bias: polar residues; it reads QATTGDGQWTVGTSPT. Composition is skewed to basic and acidic residues over residues 172 to 185, 222 to 240, 268 to 300, 349 to 371, and 385 to 398; these read ASEH…HLEG, TERK…EPAR, ATQR…DEPS, NLGE…ETKD, and SDMR…RGPE. A compositionally biased stretch (polar residues) spans 443-452; the sequence is ETQYLSSEGG. The segment covering 524–536 has biased composition (acidic residues); that stretch reads VEEEDGYQGEDPE. Polar residues predominate over residues 538–554; that stretch reads PFTQSDEGSSETPNSLA. Positions 555 to 578 are enriched in low complexity; the sequence is SEEGNSSSETGELPVQGDSQSQGD. Residues 586-598 are compositionally biased toward polar residues; that stretch reads GGHNNNPDTQRQG. A compositionally biased stretch (basic and acidic residues) spans 759-770; sequence GDQKSPAKKEHN. Residues 771-780 are compositionally biased toward polar residues; that stretch reads SSVPWSSLEK. The segment covering 881-890 has biased composition (basic and acidic residues); that stretch reads LEDKQGHPQR.

The protein belongs to the S-100 family.

The protein is Trichohyalin-like protein 1 (TCHHL1) of Homo sapiens (Human).